A 63-amino-acid chain; its full sequence is Conotoxin PnMRCL-0111 (63 aa).

A signal peptide spans 1-19 (MRCLPVFIVLLLLIVSAPG). Residues 20–49 (FDARPKTEDDVPLSSFHDDLQRTVRTLLDI) constitute a propeptide that is removed on maturation. Tryptophan 62 carries the post-translational modification Tryptophan amide.

The protein belongs to the conotoxin T superfamily. Contains 2 disulfide bonds that can be either 'C1-C3, C2-C4' or 'C1-C4, C2-C3', since these disulfide connectivities have been observed for conotoxins with cysteine framework V (for examples, see AC P0DQQ7 and AC P81755). As to expression, expressed by the venom duct.

The protein localises to the secreted. The chain is Conotoxin PnMRCL-0111 from Conus pennaceus (Feathered cone).